A 518-amino-acid chain; its full sequence is Glutamate--cysteine ligase (518 aa).

The protein belongs to the glutamate--cysteine ligase type 1 family. Type 1 subfamily.

The enzyme catalyses L-cysteine + L-glutamate + ATP = gamma-L-glutamyl-L-cysteine + ADP + phosphate + H(+). It participates in sulfur metabolism; glutathione biosynthesis; glutathione from L-cysteine and L-glutamate: step 1/2. The sequence is that of Glutamate--cysteine ligase from Escherichia coli O7:K1 (strain IAI39 / ExPEC).